A 438-amino-acid polypeptide reads, in one-letter code: GTPase Der (438 aa).

2 EngA-type G domains span residues 2–164 and 173–343; these read HKVA…PEDD and IRIS…EKWQ. Residues 8–15, 55–59, 116–119, 179–186, 226–230, and 288–291 each bind GTP; these read GRPNVGKS, DTGGL, NKID, DTAGI, and NKWD. Residues 344–428 form the KH-like domain; that stretch reads SRIGTSELNR…PVRLKWKEKG (85 aa).

It belongs to the TRAFAC class TrmE-Era-EngA-EngB-Septin-like GTPase superfamily. EngA (Der) GTPase family. As to quaternary structure, associates with the 50S ribosomal subunit.

Functionally, GTPase that plays an essential role in the late steps of ribosome biogenesis. The sequence is that of GTPase Der from Deinococcus radiodurans (strain ATCC 13939 / DSM 20539 / JCM 16871 / CCUG 27074 / LMG 4051 / NBRC 15346 / NCIMB 9279 / VKM B-1422 / R1).